We begin with the raw amino-acid sequence, 256 residues long: Triosephosphate isomerase (256 aa).

Position 9–11 (9–11 (NWK)) interacts with substrate. Residue H97 is the Electrophile of the active site. The Proton acceptor role is filled by E169. Substrate-binding positions include G175, S214, and 235 to 236 (GG).

It belongs to the triosephosphate isomerase family. Homodimer.

It is found in the cytoplasm. The enzyme catalyses D-glyceraldehyde 3-phosphate = dihydroxyacetone phosphate. It functions in the pathway carbohydrate biosynthesis; gluconeogenesis. Its pathway is carbohydrate degradation; glycolysis; D-glyceraldehyde 3-phosphate from glycerone phosphate: step 1/1. Involved in the gluconeogenesis. Catalyzes stereospecifically the conversion of dihydroxyacetone phosphate (DHAP) to D-glyceraldehyde-3-phosphate (G3P). The sequence is that of Triosephosphate isomerase from Vibrio vulnificus (strain CMCP6).